We begin with the raw amino-acid sequence, 67 residues long: Peptide Hp1036 (67 aa).

A signal peptide spans 1–23 (MKTQFAILLITLVLFQMFSQSDA). At F36 the chain carries Phenylalanine amide. Positions 40-67 (GLNDLSDLDELFDGEISEADVDFLREIM) are excised as a propeptide.

Belongs to the non-disulfide-bridged peptide (NDBP) superfamily. Short antimicrobial peptide (group 4) family. As to expression, expressed by the venom gland.

The protein localises to the secreted. It localises to the target cell membrane. Functionally, amphipathic peptide with antibacterial activities. Shows antiviral activities against the herpes simplex virus type-1. It potently inhibits the initial infection by provoking the rupture of viral envelop and the dissociation of proteins from the virions (EC(50) is 0.43 uM). It also effectively inhibits viral attachment (EC(50) is 2.87 uM), viral entry (EC(50) is 4.29 uM) and viral proliferation after infection (EC(50) is 7.86). Morever, it enters mammalian tested cells (Vero) and reduces the intracellular infectivity. In Heterometrus petersii (Asian forest scorpion), this protein is Peptide Hp1036.